The following is a 354-amino-acid chain: Protein-glutamate methylesterase/protein-glutamine glutaminase (354 aa).

Residues 7–124 (KVLCVDDSAL…REGMLEYTEM (118 aa)) enclose the Response regulatory domain. Asp58 bears the 4-aspartylphosphate mark. The 193-residue stretch at 156–348 (LLSSEKVIII…AALMKRAEAS (193 aa)) folds into the CheB-type methylesterase domain. Residues Ser168, His194, and Asp290 contribute to the active site.

The protein belongs to the CheB family. In terms of processing, phosphorylated by CheA. Phosphorylation of the N-terminal regulatory domain activates the methylesterase activity.

It localises to the cytoplasm. It carries out the reaction [protein]-L-glutamate 5-O-methyl ester + H2O = L-glutamyl-[protein] + methanol + H(+). The enzyme catalyses L-glutaminyl-[protein] + H2O = L-glutamyl-[protein] + NH4(+). Involved in chemotaxis. Part of a chemotaxis signal transduction system that modulates chemotaxis in response to various stimuli. Catalyzes the demethylation of specific methylglutamate residues introduced into the chemoreceptors (methyl-accepting chemotaxis proteins or MCP) by CheR. Also mediates the irreversible deamidation of specific glutamine residues to glutamic acid. The protein is Protein-glutamate methylesterase/protein-glutamine glutaminase of Chromohalobacter salexigens (strain ATCC BAA-138 / DSM 3043 / CIP 106854 / NCIMB 13768 / 1H11).